Consider the following 318-residue polypeptide: Beta-ketoacyl-[acyl-carrier-protein] synthase III (318 aa).

Active-site residues include Cys-113 and His-245. The interval 246 to 250 (QANIR) is ACP-binding. Asn-275 is a catalytic residue.

Belongs to the thiolase-like superfamily. FabH family. Homodimer.

It is found in the cytoplasm. It carries out the reaction malonyl-[ACP] + acetyl-CoA + H(+) = 3-oxobutanoyl-[ACP] + CO2 + CoA. It participates in lipid metabolism; fatty acid biosynthesis. Its function is as follows. Catalyzes the condensation reaction of fatty acid synthesis by the addition to an acyl acceptor of two carbons from malonyl-ACP. Catalyzes the first condensation reaction which initiates fatty acid synthesis and may therefore play a role in governing the total rate of fatty acid production. Possesses both acetoacetyl-ACP synthase and acetyl transacylase activities. Its substrate specificity determines the biosynthesis of branched-chain and/or straight-chain of fatty acids. This chain is Beta-ketoacyl-[acyl-carrier-protein] synthase III, found in Wolbachia pipientis subsp. Culex pipiens (strain wPip).